The following is a 140-amino-acid chain: Blasticidin-S deaminase (140 aa).

One can recognise a CMP/dCMP-type deaminase domain in the interval 8–140; sequence QQDLELVEVA…ELIPLKYTRN (133 aa). Residue C59 coordinates Zn(2+). Residue E61 is the Proton donor of the active site. Positions 100 and 103 each coordinate Zn(2+).

The protein belongs to the cytidine and deoxycytidylate deaminase family. It depends on Zn(2+) as a cofactor.

It catalyses the reaction blasticidin S + H2O + H(+) = deaminohydroxyblasticidin S + NH4(+). Catalyzes the deamination of the cytosine moiety of the antibiotics blasticidin S, cytomycin and acetylblasticidin S. The protein is Blasticidin-S deaminase (bsr) of Bacillus cereus.